Here is a 167-residue protein sequence, read N- to C-terminus: MFPMVTGFMNYGQQTIRAARYIGQSFMITLSQANRLPVTIQYPYEKLIPSERFRGRIHFEFDKCIACEVCVRVCPIDLPVVDWKFETDIRKKRLLNYSIDFGICIFCGNCVEYCPTNCLSMTEEYELATYDRHELNYNQIALGRLPMSVIDDFTIRTVLNSPQRKNV.

2 4Fe-4S ferredoxin-type domains span residues 55 to 84 (GRIH…VDWK) and 95 to 124 (LNYS…MTEE). [4Fe-4S] cluster-binding residues include Cys64, Cys67, Cys70, Cys74, Cys104, Cys107, Cys110, and Cys114.

The protein belongs to the complex I 23 kDa subunit family. NDH is composed of at least 16 different subunits, 5 of which are encoded in the nucleus. [4Fe-4S] cluster is required as a cofactor.

It is found in the plastid. It localises to the chloroplast thylakoid membrane. It carries out the reaction a plastoquinone + NADH + (n+1) H(+)(in) = a plastoquinol + NAD(+) + n H(+)(out). The catalysed reaction is a plastoquinone + NADPH + (n+1) H(+)(in) = a plastoquinol + NADP(+) + n H(+)(out). Its function is as follows. NDH shuttles electrons from NAD(P)H:plastoquinone, via FMN and iron-sulfur (Fe-S) centers, to quinones in the photosynthetic chain and possibly in a chloroplast respiratory chain. The immediate electron acceptor for the enzyme in this species is believed to be plastoquinone. Couples the redox reaction to proton translocation, and thus conserves the redox energy in a proton gradient. In Citrus sinensis (Sweet orange), this protein is NAD(P)H-quinone oxidoreductase subunit I, chloroplastic.